Here is a 497-residue protein sequence, read N- to C-terminus: Keratin, type II cytoskeletal 8 (497 aa).

The tract at residues 2 to 108 (TSYQRTVTVR…DPRIGQVRLE (107 aa)) is head. Residues 109 to 149 (EKEQIKTLNNQFAGFIDKVRYLEQQNKLLETKWQLLQNQTT) are coil 1A. Residues 109-421 (EKEQIKTLNN…KLLEGEESRL (313 aa)) form the IF rod domain. Positions 145 to 162 (QNQTTPSRSNLDSMFEAY) are linker 1. Residues 163 to 254 (ISNLRRQLDT…QIYDEEIREL (92 aa)) are coil 1B. A linker 12 region spans residues 255 to 278 (QTQIQDTSVIVQMDNNRQLDLDNI). Residues 279–417 (IAEVRAQYED…ATYRKLLEGE (139 aa)) are coil 2. The interval 418-497 (ESRLASGIQA…VSERSNIVKE (80 aa)) is tail.

Belongs to the intermediate filament family. Heterotetramer of two type I and two type II keratins. Keratin-8 associates with keratin-18. In terms of tissue distribution, expressed in skin.

The protein localises to the cytoplasm. The protein resides in the nucleus. It localises to the nucleoplasm. It is found in the nucleus matrix. In terms of biological role, together with KRT19, helps to link the contractile apparatus to dystrophin at the costameres of striated muscle. The protein is Keratin, type II cytoskeletal 8 of Protopterus aethiopicus (Marbled lungfish).